The sequence spans 13041 residues: Nonribosomal peptide synthetase kk1B (13041 aa).

Residues 267-663 are adenylation 1; it reads ANRVVDTPQK…GRRDSQIKIR (397 aa). The Carrier 1 domain occupies 788–864; that stretch reads ASLMTEGITL…GLINVMQQSS (77 aa). Residue S825 is modified to O-(pantetheine 4'-phosphoryl)serine. The interval 882–1313 is condensation 1; that stretch reads SFAQGRLWFL…TPIAHLQLTD (432 aa). The adenylation 2 stretch occupies residues 1341-1736; it reads FQKQVAACPN…GRMDFQIKIR (396 aa). The region spanning 1865–1939 is the Carrier 2 domain; it reads AARNEIEAVL…NLAATIKRGS (75 aa). The residue at position 1899 (S1899) is an O-(pantetheine 4'-phosphoryl)serine. Residues 1957 to 2383 form a condensation 2 region; the sequence is SFAQGRLWFL…DQPQTPLALL (427 aa). The segment at 2418–2812 is adenylation 3; that stretch reads QVAASPNATA…GRMDQQIKIR (395 aa). The tract at residues 2891–3023 is methyltransferase (M) domain 1; the sequence is VGNDFMGWTS…EYLSKVLYAL (133 aa). The region spanning 3353–3427 is the Carrier 3 domain; the sequence is GARNETEAVL…DLAASIRRGS (75 aa). The residue at position 3387 (S3387) is an O-(pantetheine 4'-phosphoryl)serine. The segment at 3445 to 3869 is condensation 3; sequence SFAQGRLWFL…DQPQIPIAVL (425 aa). An adenylation 4 region spans residues 3901 to 4300; it reads FRAQVVACPD…GRMDQQVKIR (400 aa). Residues 4412–4486 enclose the Carrier 4 domain; that stretch reads PPRNEIETIL…NLAAAVQRGS (75 aa). S4446 carries the O-(pantetheine 4'-phosphoryl)serine modification. Residues 4504–4935 form a condensation 4 region; that stretch reads SFAQGRLWFL…TPIAALSLTD (432 aa). The segment at 4963-5362 is adenylation 5; the sequence is FREQVATYPD…GRMDRQLKIR (400 aa). The interval 5430–5567 is methyltransferase (M) domain 2; it reads TYAELDTLVK…VAQYFPTPEY (138 aa). In terms of domain architecture, Carrier 5 spans 5897–5971; the sequence is QPRNEVEAVL…DLAAAIQRGS (75 aa). S5931 bears the O-(pantetheine 4'-phosphoryl)serine mark. The segment at 5989–6416 is condensation 5; the sequence is SYAQGRLWFL…DQPQTPLALL (428 aa). The adenylation 6 stretch occupies residues 6451–6845; the sequence is QVAASPNATA…GRMDQQIKIR (395 aa). The tract at residues 6924–7056 is methyltransferase (M) domain 3; it reads VGNDFMGWTS…EYLSKVLYAL (133 aa). Residues 7386-7460 form the Carrier 6 domain; the sequence is GARNEIEAAL…DLAGAVQRGS (75 aa). S7420 carries the O-(pantetheine 4'-phosphoryl)serine modification. The condensation 6 stretch occupies residues 7478–7901; the sequence is SFAQGRLWFL…GLETPRLPIS (424 aa). The interval 7934-8335 is adenylation 7; the sequence is FRTQVAASPD…GRMDRQLKIR (402 aa). A methyltransferase (M) domain 4 region spans residues 8404–8540; that stretch reads YAEIEEIDSS…AQYFPSPEYL (137 aa). One can recognise a Carrier 7 domain in the interval 8871–8945; the sequence is GPRNEIEALL…DLAASIQRGS (75 aa). O-(pantetheine 4'-phosphoryl)serine is present on S8905. The segment at 8963–9392 is condensation 7; that stretch reads SFAQGRLWFL…PKTPIAVLPL (430 aa). The tract at residues 9422 to 9822 is adenylation 8; that stretch reads FRQQVAARPD…SRMDQQVKIR (401 aa). The 75-residue stretch at 9943–10017 folds into the Carrier 8 domain; the sequence is PPTNDMERIL…DLASTIKQDS (75 aa). S9977 carries the post-translational modification O-(pantetheine 4'-phosphoryl)serine. The interval 10035–10462 is condensation 8; it reads SFAQGRLWFL…ETPQTPLAVL (428 aa). The interval 10494–10892 is adenylation 9; that stretch reads FRAQVAACPD…GRMDQQIKIR (399 aa). Positions 10959 to 11105 are methyltransferase (M) domain 5; sequence IYAEIEEIDS…EYLADVVGAL (147 aa). Positions 11428–11502 constitute a Carrier 9 domain; that stretch reads SARNEVEAVL…DLAASIERNS (75 aa). S11462 is subject to O-(pantetheine 4'-phosphoryl)serine. Residues 11520–11945 are condensation 9; that stretch reads SFAQGRLWFL…EQPQTPIAVL (426 aa). The segment at 11977-12377 is adenylation 10; the sequence is FRDQVAANPR…GRMDQQIKIR (401 aa). The 75-residue stretch at 12495 to 12569 folds into the Carrier 10 domain; it reads VPRNELEASL…DLALKVSSYI (75 aa). Residue S12529 is modified to O-(pantetheine 4'-phosphoryl)serine. The tract at residues 12647–13032 is condensation 10; sequence FPANADCDKI…RMHEEFCDII (386 aa).

The protein belongs to the NRP synthetase family.

It participates in secondary metabolite biosynthesis. In terms of biological role, nonribosomal peptide synthetase; part of the gene cluster that mediates the biosynthesis of KK-1, a novel cyclic depsipeptide with 10 residues which is a promising active compound with high activity against many plant pathogens, especially Botrytis cinerea. The nonribosomal peptide synthetase (NRPS) kk1B catalyzes the elongation and cyclization of the decapeptide chain composed of 1 D-lactic acid residue (D-Lac), 1 pipecolic acid residue (Pip), 1 aspartic acid residue (Asp), 1 isoleucine residue (Ile), 1 glycine residue (Gly), 1 tyrosine residue (Tyr) and 4 valine residues (Val). The Asp, Ile and 3 Val residues are N-methylated by the 5 methyltransferase domains from the NRPS (found in modules 3, 5, 6, 7 and 9), whereas the Tyr residue is O-methylated by the cluster encoded O-methyltransferase kk1A. Cyclization with the hydroxy group of the D-lactic acid as a nucleophile is presumed to occur in the final module of NRPS, resulting in the formation of the depsipeptide ester bond through macrocyclization by the C-terminal C domain. The thioesterase kk1J is likely to be involved in the corrective mechanism of peptide chain synthesis. The D-lactate dehydrogenase kk1H is involved in the synthesis of D-lactic acid from pyruvic acid, which is recognized by the A domain of the first kk1B module. The pyrroline-5-carboxylate reductase kk1I is involved in the synthesis of the L-pipecolic acid residue of KK-1 from delta-1-pyrroline-5-carboxylate (P5C), a metabolic intermediate of lysine. It is still unclear how kk1C and kk1D are involved in the production of KK-1. This chain is Nonribosomal peptide synthetase kk1B, found in Curvularia clavata.